The primary structure comprises 299 residues: Peroxisomal biogenesis factor 19 (299 aa).

Ala-2 is modified (N-acetylalanine). The docking to the peroxisome membrane and binding to PEX3 stretch occupies residues 2–56 (AAAEGGCGAGVEADRELEELLESALDDFDKAKPSPAPSPTISAPDASGPQKRSPG). The tract at residues 2-91 (AAAEGGCGAG…QATAEFEKAM (90 aa)) is necessary for PEX19 function on peroxisome biogenesis. Residues 25 to 63 (ALDDFDKAKPSPAPSPTISAPDASGPQKRSPGDTAKDAL) are disordered. 4 positions are modified to phosphoserine: Ser-35, Ser-39, Ser-54, and Ser-66. A Phosphothreonine modification is found at Thr-236. At Cys-296 the chain carries Cysteine methyl ester. Cys-296 carries S-farnesyl cysteine lipidation. A propeptide spans 297–299 (LIM) (removed in mature form).

This sequence belongs to the peroxin-19 family. Interacts with a broad range of peroxisomal membrane proteins, including PEX3, PEX10, PEX11A, PEX11B, PEX12, PEX13, PEX14 and PEX16, PXMP2/PMP22, PXMP4/PMP24, SLC25A17/PMP34, ABCD1/ALDP, ABCD2/ALDRP, and ABCD3/PMP70. Also interacts with the tumor suppressor CDKN2A/p19ARF.

The protein resides in the cytoplasm. Its subcellular location is the peroxisome membrane. Its function is as follows. Necessary for early peroxisomal biogenesis. Acts both as a cytosolic chaperone and as an import receptor for peroxisomal membrane proteins (PMPs). Binds and stabilizes newly synthesized PMPs in the cytoplasm by interacting with their hydrophobic membrane-spanning domains, and targets them to the peroxisome membrane by binding to the integral membrane protein PEX3. Excludes CDKN2A from the nucleus and prevents its interaction with MDM2, which results in active degradation of TP53. This Rattus norvegicus (Rat) protein is Peroxisomal biogenesis factor 19 (Pex19).